Reading from the N-terminus, the 347-residue chain is D-alanine--D-alanine ligase (347 aa).

The region spanning 134 to 332 is the ATP-grasp domain; sequence KLYAKDLGVK…LAQSLPKTPK (199 aa). Residue 161–216 coordinates ATP; it reads LIGFNFPFIIKPSNAGSSLGVSVVKEEKELIYALDGAFEYSKEILIEPFIQGVKEY. Positions 288, 300, and 302 each coordinate Mg(2+).

Belongs to the D-alanine--D-alanine ligase family. Mg(2+) serves as cofactor. It depends on Mn(2+) as a cofactor.

It is found in the cytoplasm. The catalysed reaction is 2 D-alanine + ATP = D-alanyl-D-alanine + ADP + phosphate + H(+). It functions in the pathway cell wall biogenesis; peptidoglycan biosynthesis. Its function is as follows. Cell wall formation. This chain is D-alanine--D-alanine ligase, found in Helicobacter pylori (strain Shi470).